A 101-amino-acid polypeptide reads, in one-letter code: Small ribosomal subunit protein bS18c (101 aa).

Belongs to the bacterial ribosomal protein bS18 family. As to quaternary structure, part of the 30S ribosomal subunit.

The protein localises to the plastid. It localises to the chloroplast. The sequence is that of Small ribosomal subunit protein bS18c from Oenothera biennis (German evening primrose).